Reading from the N-terminus, the 370-residue chain is DNA primase large subunit PriL (370 aa).

[4Fe-4S] cluster contacts are provided by Cys-268, Cys-341, Cys-350, and Cys-354.

This sequence belongs to the eukaryotic-type primase large subunit family. Heterodimer of a small subunit (PriS) and a large subunit (PriL). The cofactor is [4Fe-4S] cluster.

Its function is as follows. Regulatory subunit of DNA primase, an RNA polymerase that catalyzes the synthesis of short RNA molecules used as primers for DNA polymerase during DNA replication. Stabilizes and modulates the activity of the small subunit, increasing the rate of DNA synthesis, and conferring RNA synthesis capability. The DNA polymerase activity may enable DNA primase to also catalyze primer extension after primer synthesis. May also play a role in DNA repair. The protein is DNA primase large subunit PriL of Archaeoglobus fulgidus (strain ATCC 49558 / DSM 4304 / JCM 9628 / NBRC 100126 / VC-16).